A 385-amino-acid chain; its full sequence is Taurine hydroxylase-like protein SAT17 (385 aa).

It participates in mycotoxin biosynthesis. In terms of biological role, taurine hydroxylase-like protein; part of the satratoxin SC3 cluster involved in the biosynthesis of satratoxins, trichothecene mycotoxins that are associated with human food poisonings. Satratoxins are suggested to be made by products of multiple gene clusters (SC1, SC2 and SC3) that encode 21 proteins in all, including polyketide synthases, acetyltransferases, and other enzymes expected to modify the trichothecene skeleton. SC1 encodes 10 proteins, SAT1 to SAT10. The largest are SAT8, which encodes a putative polyketide synthase (PKS) with a conventional non-reducing architecture, and SAT10, a putative protein containing four ankyrin repeats and thus may be involved in protein scaffolding. The putative short-chain reductase SAT3 may assist the PKS in some capacity. SAT6 contains a secretory lipase domain and acts probably as a trichothecene esterase. SAT5 encodes a putative acetyltransferase, and so, with SAT6, may affect endogenous protection from toxicity. The probable transcription factor SAT9 may regulate the expression of the SC1 cluster. SC2 encodes proteins SAT11 to SAT16, the largest of which encodes the putative reducing PKS SAT13. SAT11 is a cytochrome P450 monooxygenase, while SAT14 and SAT16 are probable acetyltransferases. The SC2 cluster may be regulated by the transcription factor SAT15. SC3 is a small cluster that encodes 5 proteins, SAT17 to SAT21. SAT21 is a putative MFS-type transporter which may have a role in exporting secondary metabolites. The four other proteins putatively encoded in SC3 include the taurine hydroxylase-like protein SAT17, the O-methyltransferase SAT18, the acetyltransferase SAT19, and the Cys6-type zinc finger SAT20, the latter being probably involved in regulation of SC3 expression. The chain is Taurine hydroxylase-like protein SAT17 from Stachybotrys chartarum (strain CBS 109288 / IBT 7711) (Toxic black mold).